The following is a 767-amino-acid chain: Integrin beta-8 (767 aa).

Residues 1–21 (MCGSALAFLTAALLSLHNCQR) form the signal peptide. Residues 22–681 (GPALVLGAAW…SECLSGPSYL (660 aa)) are Extracellular-facing. The 50-residue stretch at 46–95 (RCGSANVVSCARCLQLGPECGWCVQEDFVSGGSGSERCDTVSSLISKGCP) folds into the PSI domain. 25 disulfide bridges follow: Cys47/Cys65, Cys55/Cys469, Cys58/Cys83, Cys68/Cys94, Cys211/Cys218, Cys266/Cys307, Cys407/Cys419, Cys439/Cys467, Cys471/Cys490, Cys471/Cys493, Cys481/Cys493, Cys498/Cys527, Cys510/Cys525, Cys519/Cys530, Cys532/Cys545, Cys552/Cys566, Cys560/Cys571, Cys573/Cys582, Cys584/Cys608, Cys592/Cys606, Cys600/Cys611, Cys613/Cys623, Cys626/Cys629, Cys633/Cys660, and Cys639/Cys656. A VWFA domain is found at 146-384 (PVDLYYLVDV…NLVVEAYKKI (239 aa)). Residues Asp154 and Ser156 each coordinate Mg(2+). Residue Asp193 participates in Ca(2+) binding. Asn233 is a glycosylation site (N-linked (GlcNAc...) asparagine). Ca(2+)-binding residues include Asn249, Asp251, Pro253, and Glu254. Residue Glu254 coordinates Mg(2+). The N-linked (GlcNAc...) asparagine glycan is linked to Asn402. 3 N-linked (GlcNAc...) asparagine glycosylation sites follow: Asn421, Asn431, and Asn456. I-EGF domains follow at residues 471–494 (CENH…PQCD), 498–546 (CHFD…QYCE), 547–583 (KDDF…DRCQ), and 584–624 (CPSA…RLCE). Asn647 carries N-linked (GlcNAc...) asparagine glycosylation. The helical transmembrane segment at 682–702 (RIFFIIFIVTFLIGLLKVLII) threads the bilayer. At 703 to 767 (RQVILQWNNN…NAQEAFRCNF (65 aa)) the chain is on the cytoplasmic side.

This sequence belongs to the integrin beta chain family. In terms of assembly, heterodimer of an alpha and a beta subunit. Beta-8 (ITGB8) associates with alpha-V (ITGAV) to form ITGAV:ITGB8. ITGAV:ITGB8 interacts with TGFB1.

It localises to the cell membrane. In terms of biological role, integrin alpha-V:beta-8 (ITGAV:ITGB8) is a receptor for fibronectin. It recognizes the sequence R-G-D in its ligands. Integrin alpha-V:beta-6 (ITGAV:ITGB6) mediates R-G-D-dependent release of transforming growth factor beta-1 (TGF-beta-1) from regulatory Latency-associated peptide (LAP), thereby playing a key role in TGF-beta-1 activation on the surface of activated regulatory T-cells (Tregs). Required during vasculogenesis. In Mus musculus (Mouse), this protein is Integrin beta-8.